Consider the following 134-residue polypeptide: ATP synthase epsilon chain, chloroplastic (134 aa).

The protein belongs to the ATPase epsilon chain family. In terms of assembly, F-type ATPases have 2 components, CF(1) - the catalytic core - and CF(0) - the membrane proton channel. CF(1) has five subunits: alpha(3), beta(3), gamma(1), delta(1), epsilon(1). CF(0) has three main subunits: a, b and c.

It is found in the plastid. The protein resides in the chloroplast thylakoid membrane. In terms of biological role, produces ATP from ADP in the presence of a proton gradient across the membrane. This Pelargonium hortorum (Common geranium) protein is ATP synthase epsilon chain, chloroplastic.